Here is a 697-residue protein sequence, read N- to C-terminus: Potassium-transporting ATPase ATP-binding subunit (697 aa).

4 consecutive transmembrane segments (helical) span residues 55–75 (PIMF…FLPS), 79–99 (SIPG…VLFA), 245–265 (LTLI…YLGF), and 271–291 (VLVA…LSAI). Aspartate 324 serves as the catalytic 4-aspartylphosphate intermediate. ATP-binding positions include aspartate 361, glutamate 365, 393–400 (FKAETRMS), and lysine 412. 2 residues coordinate Mg(2+): aspartate 535 and aspartate 539. The next 3 helical transmembrane spans lie at 605 to 625 (FAII…LNIM), 633 to 653 (AILS…PLAM), and 677 to 697 (GGVI…GLFI).

Belongs to the cation transport ATPase (P-type) (TC 3.A.3) family. Type IA subfamily. The system is composed of three essential subunits: KdpA, KdpB and KdpC.

It localises to the cell membrane. It catalyses the reaction K(+)(out) + ATP + H2O = K(+)(in) + ADP + phosphate + H(+). Its function is as follows. Part of the high-affinity ATP-driven potassium transport (or Kdp) system, which catalyzes the hydrolysis of ATP coupled with the electrogenic transport of potassium into the cytoplasm. This subunit is responsible for energy coupling to the transport system and for the release of the potassium ions to the cytoplasm. This Bacillus cereus (strain ZK / E33L) protein is Potassium-transporting ATPase ATP-binding subunit.